A 210-amino-acid polypeptide reads, in one-letter code: ATP-dependent Clp protease proteolytic subunit (210 aa).

The active-site Nucleophile is Ser-107. His-132 is an active-site residue.

The protein belongs to the peptidase S14 family. In terms of assembly, fourteen ClpP subunits assemble into 2 heptameric rings which stack back to back to give a disk-like structure with a central cavity, resembling the structure of eukaryotic proteasomes.

It is found in the cytoplasm. The enzyme catalyses Hydrolysis of proteins to small peptides in the presence of ATP and magnesium. alpha-casein is the usual test substrate. In the absence of ATP, only oligopeptides shorter than five residues are hydrolyzed (such as succinyl-Leu-Tyr-|-NHMec, and Leu-Tyr-Leu-|-Tyr-Trp, in which cleavage of the -Tyr-|-Leu- and -Tyr-|-Trp bonds also occurs).. Cleaves peptides in various proteins in a process that requires ATP hydrolysis. Has a chymotrypsin-like activity. Plays a major role in the degradation of misfolded proteins. This is ATP-dependent Clp protease proteolytic subunit from Azorhizobium caulinodans (strain ATCC 43989 / DSM 5975 / JCM 20966 / LMG 6465 / NBRC 14845 / NCIMB 13405 / ORS 571).